Reading from the N-terminus, the 724-residue chain is Catalase-peroxidase (724 aa).

The tryptophyl-tyrosyl-methioninium (Trp-Tyr) (with M-251) cross-link spans 96–225 (WHAAGTYRVA…LAAVMMGLIY (130 aa)). Residue histidine 97 is the Proton acceptor of the active site. The segment at residues 225-251 (YVNPEGVDGNPDPLRTAEDVRITFERM) is a cross-link (tryptophyl-tyrosyl-methioninium (Tyr-Met) (with W-96)). A heme b-binding site is contributed by histidine 266.

The protein belongs to the peroxidase family. Peroxidase/catalase subfamily. Homodimer or homotetramer. Requires heme b as cofactor. In terms of processing, formation of the three residue Trp-Tyr-Met cross-link is important for the catalase, but not the peroxidase activity of the enzyme.

The enzyme catalyses H2O2 + AH2 = A + 2 H2O. It catalyses the reaction 2 H2O2 = O2 + 2 H2O. Functionally, bifunctional enzyme with both catalase and broad-spectrum peroxidase activity. The chain is Catalase-peroxidase from Halorhodospira halophila (strain DSM 244 / SL1) (Ectothiorhodospira halophila (strain DSM 244 / SL1)).